An 82-amino-acid polypeptide reads, in one-letter code: ATP synthase subunit c (82 aa).

2 consecutive transmembrane segments (helical) span residues 5–25 (IASA…IGPG) and 57–77 (LAFM…LLFA).

This sequence belongs to the ATPase C chain family. F-type ATPases have 2 components, F(1) - the catalytic core - and F(0) - the membrane proton channel. F(1) has five subunits: alpha(3), beta(3), gamma(1), delta(1), epsilon(1). F(0) has four main subunits: a(1), b(1), b'(1) and c(10-14). The alpha and beta chains form an alternating ring which encloses part of the gamma chain. F(1) is attached to F(0) by a central stalk formed by the gamma and epsilon chains, while a peripheral stalk is formed by the delta, b and b' chains.

Its subcellular location is the cellular thylakoid membrane. In terms of biological role, f(1)F(0) ATP synthase produces ATP from ADP in the presence of a proton or sodium gradient. F-type ATPases consist of two structural domains, F(1) containing the extramembraneous catalytic core and F(0) containing the membrane proton channel, linked together by a central stalk and a peripheral stalk. During catalysis, ATP synthesis in the catalytic domain of F(1) is coupled via a rotary mechanism of the central stalk subunits to proton translocation. Its function is as follows. Key component of the F(0) channel; it plays a direct role in translocation across the membrane. A homomeric c-ring of between 10-14 subunits forms the central stalk rotor element with the F(1) delta and epsilon subunits. In Cyanothece sp. (strain PCC 7425 / ATCC 29141), this protein is ATP synthase subunit c.